A 189-amino-acid chain; its full sequence is Large ribosomal subunit protein uL6 (189 aa).

This sequence belongs to the universal ribosomal protein uL6 family. As to quaternary structure, part of the 50S ribosomal subunit.

This protein binds to the 23S rRNA, and is important in its secondary structure. It is located near the subunit interface in the base of the L7/L12 stalk, and near the tRNA binding site of the peptidyltransferase center. The polypeptide is Large ribosomal subunit protein uL6 (Phocaeicola vulgatus (strain ATCC 8482 / DSM 1447 / JCM 5826 / CCUG 4940 / NBRC 14291 / NCTC 11154) (Bacteroides vulgatus)).